The primary structure comprises 201 residues: 3-isopropylmalate dehydratase small subunit (201 aa).

The protein belongs to the LeuD family. LeuD type 1 subfamily. As to quaternary structure, heterodimer of LeuC and LeuD.

The enzyme catalyses (2R,3S)-3-isopropylmalate = (2S)-2-isopropylmalate. The protein operates within amino-acid biosynthesis; L-leucine biosynthesis; L-leucine from 3-methyl-2-oxobutanoate: step 2/4. Functionally, catalyzes the isomerization between 2-isopropylmalate and 3-isopropylmalate, via the formation of 2-isopropylmaleate. The polypeptide is 3-isopropylmalate dehydratase small subunit (Enterobacter sp. (strain 638)).